We begin with the raw amino-acid sequence, 278 residues long: Small ribosomal subunit protein uS3 (278 aa).

Positions 39–107 (VRDFLKKRLA…PVHVNIEEVR (69 aa)) constitute a KH type-2 domain. Positions 217–278 (VENENEARRG…DAAAVEKEVS (62 aa)) are disordered. Residues 230-239 (PRNDAGDNRG) are compositionally biased toward basic and acidic residues.

The protein belongs to the universal ribosomal protein uS3 family. In terms of assembly, part of the 30S ribosomal subunit. Forms a tight complex with proteins S10 and S14.

Binds the lower part of the 30S subunit head. Binds mRNA in the 70S ribosome, positioning it for translation. This Aromatoleum aromaticum (strain DSM 19018 / LMG 30748 / EbN1) (Azoarcus sp. (strain EbN1)) protein is Small ribosomal subunit protein uS3.